The chain runs to 189 residues: UPF0301 protein CF0373 (189 aa).

The protein belongs to the UPF0301 (AlgH) family.

The sequence is that of UPF0301 protein CF0373 from Chlamydia felis (strain Fe/C-56) (Chlamydophila felis).